A 496-amino-acid chain; its full sequence is Probable G-protein coupled receptor K01A12.3 (496 aa).

Over 1–19 the chain is Extracellular; sequence MESVTRHRADMISFFTFDS. Residues 20 to 40 form a helical membrane-spanning segment; the sequence is YISIVGVAYTAVGLLGVFCNV. Residues 41–58 lie on the Cytoplasmic side of the membrane; the sequence is TTVIMILTNRVFRLSAYT. The helical transmembrane segment at 59–79 threads the bilayer; it reads IMANVALADSIVMLIAGVACG. Topologically, residues 80-128 are extracellular; the sequence is MDVMWPNPNDLTSFIPSLEEPYQKIAPVSLRNDSKTDSSAAGFETGNIH. Asn111 is a glycosylation site (N-linked (GlcNAc...) asparagine). A helical membrane pass occupies residues 129 to 149; that stretch reads AVLSFSFVAAWTAGVISYAML. Topologically, residues 150–169 are cytoplasmic; that stretch reads GTNRCIAICYYGTKARALNQ. The helical transmembrane segment at 170 to 190 threads the bilayer; sequence VSVAVACSASTWIVGIAAALV. At 191–216 the chain is on the extracellular side; it reads GTLSQPMIGIQRTMWSISFLEPRPHT. The helical transmembrane segment at 217 to 237 threads the bilayer; sequence TLFFTLLCAANLLGLGAQWVC. The Cytoplasmic portion of the chain corresponds to 238–285; the sequence is STLVLLKIRQVKKKISKNKLNQNSANRFRKQVILALNEIIVTGNFKAR. A helical transmembrane segment spans residues 286–306; it reads LTFQFFYPSILCTISTFLFFI. Topologically, residues 307–318 are extracellular; the sequence is KPYAFEYLSGWQ. Residues 319-339 traverse the membrane as a helical segment; the sequence is LVILHLLWLCNHTCNPFIYAY. Topologically, residues 340–496 are cytoplasmic; it reads FNDRMRLTYK…WVKFAKKASI (157 aa). The disordered stretch occupies residues 451-470; sequence TKELESAHNQGGSSRFDSER.

Belongs to the G-protein coupled receptor 1 family.

The protein resides in the cell membrane. The polypeptide is Probable G-protein coupled receptor K01A12.3 (Caenorhabditis elegans).